The chain runs to 325 residues: 5-dehydro-2-deoxygluconokinase (325 aa).

It belongs to the carbohydrate kinase PfkB family.

It catalyses the reaction 5-dehydro-2-deoxy-D-gluconate + ATP = 6-phospho-5-dehydro-2-deoxy-D-gluconate + ADP + H(+). The protein operates within polyol metabolism; myo-inositol degradation into acetyl-CoA; acetyl-CoA from myo-inositol: step 5/7. Functionally, catalyzes the phosphorylation of 5-dehydro-2-deoxy-D-gluconate (2-deoxy-5-keto-D-gluconate or DKG) to 6-phospho-5-dehydro-2-deoxy-D-gluconate (DKGP). The chain is 5-dehydro-2-deoxygluconokinase from Listeria monocytogenes serotype 4a (strain HCC23).